The following is a 336-amino-acid chain: Anthranilate phosphoribosyltransferase (336 aa).

5-phospho-alpha-D-ribose 1-diphosphate-binding positions include Gly83, 86–87 (GD), Thr91, 93–96 (NIST), 111–119 (KHGNRSVSS), and Ser123. Position 83 (Gly83) interacts with anthranilate. Mg(2+) is bound at residue Ser95. Asn114 serves as a coordination point for anthranilate. Residue Arg169 participates in anthranilate binding. 2 residues coordinate Mg(2+): Asp227 and Glu228.

Belongs to the anthranilate phosphoribosyltransferase family. Homodimer. Requires Mg(2+) as cofactor.

It catalyses the reaction N-(5-phospho-beta-D-ribosyl)anthranilate + diphosphate = 5-phospho-alpha-D-ribose 1-diphosphate + anthranilate. It participates in amino-acid biosynthesis; L-tryptophan biosynthesis; L-tryptophan from chorismate: step 2/5. Functionally, catalyzes the transfer of the phosphoribosyl group of 5-phosphorylribose-1-pyrophosphate (PRPP) to anthranilate to yield N-(5'-phosphoribosyl)-anthranilate (PRA). This chain is Anthranilate phosphoribosyltransferase, found in Vibrio campbellii (strain ATCC BAA-1116).